We begin with the raw amino-acid sequence, 875 residues long: Serrate RNA effector molecule homolog (875 aa).

The interval M1 to D90 is disordered. G2 bears the N-acetylglycine mark. S4 bears the Phosphoserine mark. Y8 bears the Phosphotyrosine mark. Residues Y8–L73 are compositionally biased toward basic and acidic residues. A phosphoserine mark is found at S67, S74, and S136. K150 participates in a covalent cross-link: Glycyl lysine isopeptide (Lys-Gly) (interchain with G-Cter in SUMO2). Residues E272–C411 are disordered. The span at E297–A345 shows a compositional bias: basic and acidic residues. The segment covering S369–E386 has biased composition (acidic residues). The segment covering E387–C411 has biased composition (basic and acidic residues). A phosphoserine mark is found at S492 and S539. A Phosphothreonine modification is found at T543. S569 carries the post-translational modification Phosphoserine. Positions E571 to N597 are disordered. Phosphothreonine is present on T670. S678 is subject to Phosphoserine. Residues R832, R839, and R849 each carry the omega-N-methylarginine modification. The tract at residues N834 to V853 is disordered.

It belongs to the ARS2 family. As to quaternary structure, interacts with CASP8AP2 and ERBB4. Interacts with NCBP1/CBP80 and DROSHA. Interacts with LUZP4. Interacts with NCBP2/CBP20 and NCBP3. Interacts with MTREX. As to expression, widely expressed, with a preference for proliferating cells. Highly expressed in hematopoietic tissues and reduced or absent expression in parenchymal organs like liver and kidney. In the brain, expressed in the subventricular zone by niche astrocytes, ependymal cells and neural stem cells. In this cerebral context, expressed in slowly dividing cells.

Its subcellular location is the nucleus. The protein localises to the nucleoplasm. The protein resides in the cytoplasm. In terms of biological role, acts as a mediator between the cap-binding complex (CBC) and the primary microRNAs (miRNAs) processing machinery during cell proliferation. Contributes to the stability and delivery of capped primary miRNA transcripts to the primary miRNA processing complex containing DGCR8 and DROSHA, thereby playing a role in RNA-mediated gene silencing (RNAi) by miRNAs. Binds capped RNAs (m7GpppG-capped RNA); however interaction is probably mediated via its interaction with NCBP1/CBP80 component of the CBC complex. Involved in cell cycle progression at S phase. Does not directly confer arsenite resistance but rather modulates arsenic sensitivity. Independently of its activity on miRNAs, necessary and sufficient to promote neural stem cell self-renewal. Does so by directly binding SOX2 promoter and positively regulating its transcription. This Mus musculus (Mouse) protein is Serrate RNA effector molecule homolog (Srrt).